Reading from the N-terminus, the 535-residue chain is Calcium-dependent protein kinase 5 (535 aa).

Residues 1 to 46 (MGNACRGSFGGKTFQGYPQPQDHSESNSNPKHNSDSPKPKKEQQPL) form a disordered region. G2 is lipidated: N-myristoyl glycine. C5 carries the S-palmitoyl cysteine lipid modification. Basic and acidic residues predominate over residues 32 to 43 (HNSDSPKPKKEQ). Positions 72-330 (YTLGRKLGQG…AHEVLCHPWI (259 aa)) constitute a Protein kinase domain. Residues 78-86 (LGQGQFGTT) and K101 contribute to the ATP site. The active-site Proton acceptor is D196. An autoinhibitory domain region spans residues 336–366 (APDRALDPAVLSRLKHFSAMNKLKKMALRVI). EF-hand domains are found at residues 373–408 (EEIA…YGST), 409–444 (LKDI…LNKL), 445–480 (DREE…HNIT), and 484–514 (FEDI…GNPC). D386, D388, S390, E397, D422, D424, S426, T428, E433, D458, D460, S462, Y464, E469, D492, D494, D496, R498, and E503 together coordinate Ca(2+).

This sequence belongs to the protein kinase superfamily. Ser/Thr protein kinase family. CDPK subfamily.

The protein resides in the cell membrane. The catalysed reaction is L-seryl-[protein] + ATP = O-phospho-L-seryl-[protein] + ADP + H(+). It carries out the reaction L-threonyl-[protein] + ATP = O-phospho-L-threonyl-[protein] + ADP + H(+). With respect to regulation, activated by calcium. Autophosphorylation may play an important role in the regulation of the kinase activity. In terms of biological role, regulates the production of reactive oxygen species (ROS) by NADPH oxidase. This Solanum tuberosum (Potato) protein is Calcium-dependent protein kinase 5 (CPK5).